Reading from the N-terminus, the 397-residue chain is MKFVDEAEIRVEAGDGGAGTVSFRREKYVPDGGPDGGDGGDGGSVYLVADENLNTLIDYRFERFHRAERGKNGQSADCTGRKGADLEVKVPVGTRATDTETGELLGDLTKHGQRLKAAQGGYHGLGNARFKTSTNRAPRQKTLGTPGDVRMLKLELMLLADVGLLGMPNAGKSTFIRSVSAAKPKVADYPFTTLVPNLGVVRLDAMSSFVIADIPGLIEGASEGAGLGIQFLKHLERCRVLLHLIDLMPADGSDPVDNAKAIVTELEKYSPKLAAKPRWLVFNKVDLMFEDEAQDLCKKIADAMNWEGEYYSISAVQGKNTKELCIKVMDFIESLPEDAIEESDDEEVGFKWDTYHKETVENYEDDDDFDDDDDDDFDGDDDDDFDGDDDFEVIYQK.

One can recognise an Obg domain in the interval Met-1 to Leu-159. A disordered region spans residues Ser-22–Ser-44. The span at Gly-33–Gly-43 shows a compositional bias: gly residues. An OBG-type G domain is found at Ala-160–Glu-333. Residues Gly-166–Ser-173, Phe-191–Val-195, Asp-213–Gly-216, Asn-283–Asp-286, and Ser-314–Val-316 each bind GTP. Mg(2+) is bound by residues Ser-173 and Thr-193. The interval Thr-359 to Asp-389 is disordered. Positions Glu-361–Asp-389 are enriched in acidic residues.

It belongs to the TRAFAC class OBG-HflX-like GTPase superfamily. OBG GTPase family. Monomer. It depends on Mg(2+) as a cofactor.

It is found in the cytoplasm. In terms of biological role, an essential GTPase which binds GTP, GDP and possibly (p)ppGpp with moderate affinity, with high nucleotide exchange rates and a fairly low GTP hydrolysis rate. Plays a role in control of the cell cycle, stress response, ribosome biogenesis and in those bacteria that undergo differentiation, in morphogenesis control. The protein is GTPase Obg of Pseudoalteromonas atlantica (strain T6c / ATCC BAA-1087).